Consider the following 224-residue polypeptide: Large ribosomal subunit protein uL3 (224 aa).

The residue at position 158 (glutamine 158) is an N5-methylglutamine.

Belongs to the universal ribosomal protein uL3 family. Part of the 50S ribosomal subunit. Forms a cluster with proteins L14 and L19. Methylated by PrmB.

In terms of biological role, one of the primary rRNA binding proteins, it binds directly near the 3'-end of the 23S rRNA, where it nucleates assembly of the 50S subunit. In Paracidovorax citrulli (strain AAC00-1) (Acidovorax citrulli), this protein is Large ribosomal subunit protein uL3.